We begin with the raw amino-acid sequence, 790 residues long: Ribonucleoside-diphosphate reductase large subunit (790 aa).

Residues threonine 208, 223–224, glycine 254, 436–440, and 621–625 contribute to the substrate site; these read SC, NLCTE, and PTVSS. Cysteine 224 and cysteine 453 are disulfide-bonded. Asparagine 436 functions as the Proton acceptor in the catalytic mechanism. The Cysteine radical intermediate role is filled by cysteine 438. Residue glutamate 440 is the Proton acceptor of the active site.

This sequence belongs to the ribonucleoside diphosphate reductase large chain family. As to quaternary structure, heterotetramer composed of a homodimer of the large subunit (R1) and a homodimer of the small subunit (R2). Larger multisubunit protein complex are also active, composed of (R1)n(R2)n.

It catalyses the reaction a 2'-deoxyribonucleoside 5'-diphosphate + [thioredoxin]-disulfide + H2O = a ribonucleoside 5'-diphosphate + [thioredoxin]-dithiol. Functionally, ribonucleoside-diphosphate reductase holoenzyme provides the precursors necessary for viral DNA synthesis. Allows virus growth in non-dividing cells, as well as reactivation from latency in infected hosts. Catalyzes the biosynthesis of deoxyribonucleotides from the corresponding ribonucleotides. This Equus caballus (Horse) protein is Ribonucleoside-diphosphate reductase large subunit.